The chain runs to 232 residues: Thiamine import ATP-binding protein ThiQ (232 aa).

An ABC transporter domain is found at 2 to 230; the sequence is LKLTDITWLY…KASASAILGI (229 aa). 32 to 39 provides a ligand contact to ATP; that stretch reads GPSGAGKS.

This sequence belongs to the ABC transporter superfamily. Thiamine importer (TC 3.A.1.19.1) family. In terms of assembly, the complex is composed of two ATP-binding proteins (ThiQ), two transmembrane proteins (ThiP) and a solute-binding protein (ThiB).

The protein resides in the cell inner membrane. It catalyses the reaction thiamine(out) + ATP + H2O = thiamine(in) + ADP + phosphate + H(+). Part of the ABC transporter complex ThiBPQ involved in thiamine import. Responsible for energy coupling to the transport system. This Shigella boydii serotype 4 (strain Sb227) protein is Thiamine import ATP-binding protein ThiQ.